The sequence spans 120 residues: Large ribosomal subunit protein eL18 (120 aa).

It belongs to the eukaryotic ribosomal protein eL18 family.

The protein is Large ribosomal subunit protein eL18 of Methanococcus maripaludis (strain DSM 14266 / JCM 13030 / NBRC 101832 / S2 / LL).